Here is a 667-residue protein sequence, read N- to C-terminus: Mannosyl-oligosaccharide alpha-1,2-mannosidase IA (667 aa).

The Cytoplasmic segment spans residues 1–18 (MYRISPIGRKSNFHSREK). A helical; Signal-anchor for type II membrane protein membrane pass occupies residues 19–39 (CLIGLVLVTLCFLCFGGIFLL). At 40 to 667 (PDNFGSDRVL…PVTLPVSNAS (628 aa)) the chain is on the lumenal side. Residues 154 to 192 (GDNAASQASSHPQSSAQQHNQQQPQLPLGGGGNDQAPDT) are disordered. Residues 156–178 (NAASQASSHPQSSAQQHNQQQPQ) show a composition bias toward low complexity. N-linked (GlcNAc...) asparagine glycosylation occurs at N278. A disulfide bridge links C483 with C515. Catalysis depends on E529, which acts as the Proton donor. T640 provides a ligand contact to Ca(2+).

This sequence belongs to the glycosyl hydrolase 47 family. Requires Ca(2+) as cofactor. Mg(2+) is required as a cofactor. As to expression, complex spatial distribution during embryogenesis, including expression in lobula plate giant neurons. Also expressed in adult wing and eyes.

Its subcellular location is the golgi apparatus membrane. It carries out the reaction N(4)-(alpha-D-Man-(1-&gt;2)-alpha-D-Man-(1-&gt;2)-alpha-D-Man-(1-&gt;3)-[alpha-D-Man-(1-&gt;2)-alpha-D-Man-(1-&gt;3)-[alpha-D-Man-(1-&gt;2)-alpha-D-Man-(1-&gt;6)]-alpha-D-Man-(1-&gt;6)]-beta-D-Man-(1-&gt;4)-beta-D-GlcNAc-(1-&gt;4)-beta-D-GlcNAc)-L-asparaginyl-[protein] (N-glucan mannose isomer 9A1,2,3B1,2,3) + 4 H2O = N(4)-(alpha-D-Man-(1-&gt;3)-[alpha-D-Man-(1-&gt;3)-[alpha-D-Man-(1-&gt;6)]-alpha-D-Man-(1-&gt;6)]-beta-D-Man-(1-&gt;4)-beta-D-GlcNAc-(1-&gt;4)-beta-D-GlcNAc)-L-asparaginyl-[protein] (N-glucan mannose isomer 5A1,2) + 4 beta-D-mannose. The catalysed reaction is N(4)-(alpha-D-Man-(1-&gt;2)-alpha-D-Man-(1-&gt;2)-alpha-D-Man-(1-&gt;3)-[alpha-D-Man-(1-&gt;3)-[alpha-D-Man-(1-&gt;2)-alpha-D-Man-(1-&gt;6)]-alpha-D-Man-(1-&gt;6)]-beta-D-Man-(1-&gt;4)-beta-D-GlcNAc-(1-&gt;4)-beta-D-GlcNAc)-L-asparaginyl-[protein] (N-glucan mannose isomer 8A1,2,3B1,3) + 3 H2O = N(4)-(alpha-D-Man-(1-&gt;3)-[alpha-D-Man-(1-&gt;3)-[alpha-D-Man-(1-&gt;6)]-alpha-D-Man-(1-&gt;6)]-beta-D-Man-(1-&gt;4)-beta-D-GlcNAc-(1-&gt;4)-beta-D-GlcNAc)-L-asparaginyl-[protein] (N-glucan mannose isomer 5A1,2) + 3 beta-D-mannose. The protein operates within protein modification; protein glycosylation. Involved in the maturation of Asn-linked oligosaccharides. Progressively trim alpha-1,2-linked mannose residues from Man(9)GlcNAc(2) to produce Man(5)GlcNAc(2). The protein is Mannosyl-oligosaccharide alpha-1,2-mannosidase IA of Drosophila melanogaster (Fruit fly).